The chain runs to 222 residues: Deoxyribose-phosphate aldolase (222 aa).

Asp-89 functions as the Proton donor/acceptor in the catalytic mechanism. Lys-152 functions as the Schiff-base intermediate with acetaldehyde in the catalytic mechanism. Lys-181 serves as the catalytic Proton donor/acceptor.

The protein belongs to the DeoC/FbaB aldolase family. DeoC type 1 subfamily.

It is found in the cytoplasm. It catalyses the reaction 2-deoxy-D-ribose 5-phosphate = D-glyceraldehyde 3-phosphate + acetaldehyde. It participates in carbohydrate degradation; 2-deoxy-D-ribose 1-phosphate degradation; D-glyceraldehyde 3-phosphate and acetaldehyde from 2-deoxy-alpha-D-ribose 1-phosphate: step 2/2. In terms of biological role, catalyzes a reversible aldol reaction between acetaldehyde and D-glyceraldehyde 3-phosphate to generate 2-deoxy-D-ribose 5-phosphate. The protein is Deoxyribose-phosphate aldolase of Clostridium novyi (strain NT).